A 134-amino-acid chain; its full sequence is D-ribose pyranase (134 aa).

The Proton donor role is filled by His20. Residues Asp28, His99, and 123–125 contribute to the substrate site; that span reads YSN.

It belongs to the RbsD / FucU family. RbsD subfamily. In terms of assembly, homodecamer.

It is found in the cytoplasm. The enzyme catalyses beta-D-ribopyranose = beta-D-ribofuranose. Its pathway is carbohydrate metabolism; D-ribose degradation; D-ribose 5-phosphate from beta-D-ribopyranose: step 1/2. Its function is as follows. Catalyzes the interconversion of beta-pyran and beta-furan forms of D-ribose. In Staphylococcus aureus (strain Mu3 / ATCC 700698), this protein is D-ribose pyranase.